A 318-amino-acid chain; its full sequence is COP9 signalosome complex subunit 6 (318 aa).

One can recognise an MPN domain in the interval 32–165 (VALHPLVILN…VSVYESVIDI (134 aa)).

The protein belongs to the peptidase M67A family. CSN6 subfamily. Component of the CSN complex, probably composed of cops1, cops2, cops3, cops4, cops5, cops6, cops7, cops8 and cops9.

The protein localises to the cytoplasm. It localises to the nucleus. Component of the COP9 signalosome complex (CSN), a complex involved in various cellular and developmental processes. The CSN complex is an essential regulator of the ubiquitin (Ubl) conjugation pathway by mediating the deneddylation of the cullin subunits of E3 ligase complexes, leading to modify the Ubl ligase activity. The protein is COP9 signalosome complex subunit 6 (cops6) of Xenopus laevis (African clawed frog).